Consider the following 109-residue polypeptide: Small ribosomal subunit protein bS6 (109 aa).

Belongs to the bacterial ribosomal protein bS6 family.

Its function is as follows. Binds together with bS18 to 16S ribosomal RNA. The sequence is that of Small ribosomal subunit protein bS6 from Dehalococcoides mccartyi (strain ATCC BAA-2266 / KCTC 15142 / 195) (Dehalococcoides ethenogenes (strain 195)).